Here is a 365-residue protein sequence, read N- to C-terminus: UDP-N-acetylglucosamine--N-acetylmuramyl-(pentapeptide) pyrophosphoryl-undecaprenol N-acetylglucosamine transferase (365 aa).

Residues threonine 10–glycine 12, asparagine 128, arginine 170, serine 199, isoleucine 250, and glutamine 295 each bind UDP-N-acetyl-alpha-D-glucosamine.

Belongs to the glycosyltransferase 28 family. MurG subfamily.

The protein resides in the cell inner membrane. It carries out the reaction di-trans,octa-cis-undecaprenyl diphospho-N-acetyl-alpha-D-muramoyl-L-alanyl-D-glutamyl-meso-2,6-diaminopimeloyl-D-alanyl-D-alanine + UDP-N-acetyl-alpha-D-glucosamine = di-trans,octa-cis-undecaprenyl diphospho-[N-acetyl-alpha-D-glucosaminyl-(1-&gt;4)]-N-acetyl-alpha-D-muramoyl-L-alanyl-D-glutamyl-meso-2,6-diaminopimeloyl-D-alanyl-D-alanine + UDP + H(+). The protein operates within cell wall biogenesis; peptidoglycan biosynthesis. Its function is as follows. Cell wall formation. Catalyzes the transfer of a GlcNAc subunit on undecaprenyl-pyrophosphoryl-MurNAc-pentapeptide (lipid intermediate I) to form undecaprenyl-pyrophosphoryl-MurNAc-(pentapeptide)GlcNAc (lipid intermediate II). This Prosthecochloris aestuarii (strain DSM 271 / SK 413) protein is UDP-N-acetylglucosamine--N-acetylmuramyl-(pentapeptide) pyrophosphoryl-undecaprenol N-acetylglucosamine transferase.